The primary structure comprises 417 residues: Mitochondrial inner membrane i-AAA protease supercomplex subunit MGR1 (417 aa).

A disordered region spans residues 1–28 (MAVFTPPSGNSNSTDHTHTQDDHDKDDN). Residues 1 to 56 (MAVFTPPSGNSNSTDHTHTQDDHDKDDNDIKKFYIRPSLGLKLWGPLVPAPDNLPG) are Mitochondrial intermembrane-facing. Residues 15–28 (DHTHTQDDHDKDDN) are compositionally biased toward basic and acidic residues. The helical transmembrane segment at 57–73 (LYTLITIQSAVGFFALW) threads the bilayer. Residues 74–151 (RLRRLYKLPP…RQSRFVSVRK (78 aa)) lie on the Mitochondrial matrix side of the membrane. Residues 152-169 (LLWGLFGSLLLSQSLLEL) form a helical membrane-spanning segment. At 170–417 (TRLNFLKYDP…PKALTNEKTH (248 aa)) the chain is on the mitochondrial intermembrane side. Over residues 391–401 (SHTKTPTSTDQ) the composition is skewed to polar residues. The interval 391–417 (SHTKTPTSTDQPLPGPTPKALTNEKTH) is disordered.

Belongs to the MGR1 family. Component of the mitochondrial inner membrane i-AAA protease supercomplex composed of MGR1, MGR3 and YME1. With MGR3, forms a subcomplex that binds to YME1 and to substrates to facilitate proteolysis. Interacts directly with YME1.

The protein resides in the mitochondrion inner membrane. In terms of biological role, component of the mitochondrial inner membrane i-AAA protease supercomplex required for mitochondrial inner membrane protein turnover. Together with MGR3, functions in an adapter complex that targets substrates to the i-AAA protease for degradation. Required for growth of cells lacking the mitochondrial genome. The polypeptide is Mitochondrial inner membrane i-AAA protease supercomplex subunit MGR1 (MGR1) (Saccharomyces cerevisiae (strain ATCC 204508 / S288c) (Baker's yeast)).